Consider the following 359-residue polypeptide: Serine hydrolase-like protein DDB_G0286239 (359 aa).

In terms of domain architecture, AB hydrolase-1 spans 38–289 (LALHGWLDNA…VPGSHHFHME (252 aa)). Ser-111 is an active-site residue. Positions 310-359 (FTPSSTTQQQQQQQQSAENKKGDNHNQIAEQDLSTSNTSSPIISKPKPNL) are disordered. The span at 334 to 351 (HNQIAEQDLSTSNTSSPI) shows a compositional bias: polar residues.

It belongs to the AB hydrolase superfamily.

Functionally, probable serine hydrolase. This chain is Serine hydrolase-like protein DDB_G0286239, found in Dictyostelium discoideum (Social amoeba).